Consider the following 152-residue polypeptide: Proteolipid protein 2 (152 aa).

Positions 19-138 (FSRTKKGILL…DAYITFPLKQ (120 aa)) constitute an MARVEL domain. A run of 4 helical transmembrane segments spans residues 25-45 (GILLFAEIILCLVILICFSAS), 48-68 (SAYSSLSVIEMICAAVLLVFY), 85-105 (DFFRSLIATILYLITSIVVLV), and 112-132 (RVVAGILGLLATLLFGYDAYI).

It is found in the membrane. Its function is as follows. May play a role in cell differentiation in the intestinal epithelium. The polypeptide is Proteolipid protein 2 (Plp2) (Mus musculus (Mouse)).